Reading from the N-terminus, the 470-residue chain is Serine hydroxymethyltransferase 5 (470 aa).

At Lys-244 the chain carries N6-(pyridoxal phosphate)lysine.

This sequence belongs to the SHMT family. In terms of assembly, homotetramer. Requires pyridoxal 5'-phosphate as cofactor.

The protein localises to the cytoplasm. It catalyses the reaction (6R)-5,10-methylene-5,6,7,8-tetrahydrofolate + glycine + H2O = (6S)-5,6,7,8-tetrahydrofolate + L-serine. It participates in one-carbon metabolism; tetrahydrofolate interconversion. Its function is as follows. Catalyzes the interconversion of serine and glycine. The polypeptide is Serine hydroxymethyltransferase 5 (SHM5) (Arabidopsis thaliana (Mouse-ear cress)).